The primary structure comprises 76 residues: Large ribosomal subunit protein bL31 (76 aa).

This sequence belongs to the bacterial ribosomal protein bL31 family. Type A subfamily. As to quaternary structure, part of the 50S ribosomal subunit.

In terms of biological role, binds the 23S rRNA. This is Large ribosomal subunit protein bL31 from Picosynechococcus sp. (strain ATCC 27264 / PCC 7002 / PR-6) (Agmenellum quadruplicatum).